We begin with the raw amino-acid sequence, 805 residues long: MAYNHKDIEQKWQQFWSDNETFKTVEDADKPKYYALDMFPYPSGQGLHVGHPEGYTATDIMSRMKRMQGYKVLHPMGWDAFGLPAEQYAMKTGNNPRDFTAKNIQNFKRQIQSLGFSYDWSREVNTTDPAYYKWTQWIFEQLYKKGLAYEKETLVNWAPDLMGGTVVANEEVVDGKTERGGFPVYRKPMKQWILKITAYADRLIDDLDLVDWPDSIKEMQKNWIGRSVGASVFFNVEDSEKQIEVFTTRPDTLFGATYLVISPEHDLVDQITTPESKAAVEEYKKAVATKSDLERTDLNKDKTGVFTGAYAVNPVNGKKIPVWISDYVLASYGTGAVMAVPAHDGRDYEFAKKFKIDMVPVYEGGNLEDGVLDSEGGLINSGFLDGMDKQTAIDTMISWLEEHGVGHKKVNYRLRDWVFSRQRYWGEPIPVIHWEDGETTLIPEDELPLRLPAATDIRPSGTGESPLANLDDWVNVVDENGRKGRRETNTMPQWAGSSWYFLRYVDPKNDQKIADEDLLKEWLPVDLYVGGAEHAVLHLLYARFWHKVLYDLGVVPTKEPFQKLVNQGMILGSNHEKMSKSKGNVVNPDDIVERFGADTLRLYEMFMGPLTESVAWSEDGLNGSRKWIDRVWRLMIDDENQLRDHIVTENDGSLDMIYNQTVKKVTDDYENMRFNTAISQMMVFVNEAYKADKLPAVYMEGLVKMLAPIIPHVAEELWSLLGHEGGISYAEWPTYDESKLVEATVQVILQVNGKVRSKITVDKDIAKEELEKLALADAKIQQWTADKTVRKVIVIPNKIVNIVVG.

Positions 40–51 (PYPSGQGLHVGH) match the 'HIGH' region motif. Residues 577–581 (KMSKS) carry the 'KMSKS' region motif. Residue lysine 580 coordinates ATP.

Belongs to the class-I aminoacyl-tRNA synthetase family.

It localises to the cytoplasm. The enzyme catalyses tRNA(Leu) + L-leucine + ATP = L-leucyl-tRNA(Leu) + AMP + diphosphate. The sequence is that of Leucine--tRNA ligase from Pediococcus pentosaceus (strain ATCC 25745 / CCUG 21536 / LMG 10740 / 183-1w).